The following is a 229-amino-acid chain: Large ribosomal subunit protein uL1 (229 aa).

It belongs to the universal ribosomal protein uL1 family. As to quaternary structure, part of the 50S ribosomal subunit.

Binds directly to 23S rRNA. The L1 stalk is quite mobile in the ribosome, and is involved in E site tRNA release. Its function is as follows. Protein L1 is also a translational repressor protein, it controls the translation of the L11 operon by binding to its mRNA. In Listeria monocytogenes serovar 1/2a (strain ATCC BAA-679 / EGD-e), this protein is Large ribosomal subunit protein uL1.